The sequence spans 32 residues: Photosystem I reaction center subunit XII (32 aa).

A helical transmembrane segment spans residues 3-23; it reads SISDGQIVVALISAFIIVILA.

The protein belongs to the PsaM family.

It is found in the plastid. Its subcellular location is the chloroplast thylakoid membrane. This chain is Photosystem I reaction center subunit XII, found in Anthoceros angustus (Hornwort).